The following is a 751-amino-acid chain: Meiotic sister-chromatid recombination protein 3 (751 aa).

Disordered stretches follow at residues 54 to 88 (GVGM…RTYS), 216 to 290 (LRAP…KKQM), 314 to 410 (PALE…EARF), 431 to 504 (TQEN…RPSF), and 558 to 610 (KDVP…SPPQ). A compositionally biased stretch (low complexity) spans 216-228 (LRAPPRVQQQRQL). Composition is skewed to basic and acidic residues over residues 345-356 (ERSRPAKREVRK) and 384-393 (ERVHNKEKTL). Over residues 431–496 (TQENSTRDNG…GCETGNTTPK (66 aa)) the composition is skewed to polar residues. The span at 596-609 (RSSISSSPRRSSPP) shows a compositional bias: low complexity.

Its subcellular location is the cell membrane. May be involved in the control of meiotic sister-chromatid recombination. This is Meiotic sister-chromatid recombination protein 3 (MSC3) from Eremothecium gossypii (strain ATCC 10895 / CBS 109.51 / FGSC 9923 / NRRL Y-1056) (Yeast).